Here is a 460-residue protein sequence, read N- to C-terminus: Spermatogenesis-defective protein 39 homolog (460 aa).

T21 is modified (phosphothreonine). Positions 70–101 (SIKETAGSSGSTSEGREQMKGRNSFYTQLPKP) are disordered. The span at 73-82 (ETAGSSGSTS) shows a compositional bias: low complexity. At T115 the chain carries Phosphothreonine. Phosphoserine is present on residues S119, S122, and S128. A compositionally biased stretch (polar residues) spans 121-133 (QSLSDALSDTPAK). Residues 121-141 (QSLSDALSDTPAKTYSPELGR) are disordered. A Phosphothreonine modification is found at T130.

The protein belongs to the SPE39 family. As to quaternary structure, interacts with VPS33B. Associates with the homotypic fusion and vacuole protein sorting (HOPS) complex; impaired by VPS33B. Interacts with RAB11A.

Its subcellular location is the cytoplasm. The protein resides in the cytoplasmic vesicle. It is found in the early endosome. It localises to the recycling endosome. The protein localises to the late endosome. In terms of biological role, proposed to be involved in endosomal maturation implicating in part VPS33B. In epithelial cells, the VPS33B:VIPAS39 complex may play a role in the apical RAB11A-dependent recycling pathway and in the maintenance of the apical-basolateral polarity. May play a role in lysosomal trafficking, probably via association with the core HOPS complex in a discrete population of endosomes; the functions seems to be independent of VPS33B. May play a role in vesicular trafficking during spermatogenesis. May be involved in direct or indirect transcriptional regulation of E-cadherin. This chain is Spermatogenesis-defective protein 39 homolog (Vipas39), found in Rattus norvegicus (Rat).